Here is a 1372-residue protein sequence, read N- to C-terminus: Collagen alpha-2(I) chain (1372 aa).

Residues 1-22 (MLSFVDTRTLLLLAVTSCLATC) form the signal peptide. Pyrrolidone carboxylic acid is present on glutamine 23. The propeptide at 23-85 (QSLQMGSVRK…PPGLTGNFAA (63 aa)) is N-terminal propeptide. The interval 28–1135 (GSVRKGPTGD…DQPRSQPSLR (1108 aa)) is disordered. The span at 59-77 (VGPPGPPGAPGPPGPPGPP) shows a compositional bias: pro residues. Pyrrolidone carboxylic acid is present on glutamine 86. The residue at position 90 (lysine 90) is an Allysine. Low complexity predominate over residues 95–146 (GPGPMGLMGPRGPPGAVGAPGPQGFQGPAGEPGEPGQTGPAGSRGPAGPPGK). The segment covering 147–161 (AGEDGHPGKPGRPGE) has biased composition (basic and acidic residues). Position 183 is a 5-hydroxylysine; alternate (lysine 183). Lysine 183 is a glycosylation site (O-linked (Gal...) hydroxylysine; alternate). 7 stretches are compositionally biased toward low complexity: residues 231-260 (VGAP…SAGP), 285-299 (AGPR…LSGP), 306-327 (PGAN…AGAP), 336-348 (PGPV…TGPR), 390-416 (PGEP…LPGA), 476-495 (LPGI…RGEA), and 519-537 (PGLA…NGAQ). Positions 544-553 (GVQGGKGEQG) are enriched in gly residues. Residues 600-639 (PGESGAAGPSGPIGIRGPSGAPGPDGNKGEAGAVGAPGSA) show a composition bias toward low complexity. Residues 640–649 (GASGPGGLPG) are compositionally biased toward gly residues. Low complexity-rich tracts occupy residues 674-716 (NPGR…PRGS) and 725-743 (PAGP…QPGA). Positions 744-753 (KGEKGTKGPK) are enriched in basic and acidic residues. The span at 755–771 (ENGIVGPTGPVGAAGPS) shows a compositional bias: low complexity. Residues 781 to 790 (GSRGDGGPPG) are compositionally biased toward gly residues. The Cell attachment site motif lies at 783–785 (RGD). Positions 792–801 (TGFPGAAGRT) are enriched in low complexity. The Cell attachment site motif lies at 828–830 (RGD). Low complexity-rich tracts occupy residues 855–882 (SGEP…LGLP), 891–927 (PGIA…NGAP), 957–978 (PGNI…VGPA), and 987–1007 (PGPA…PSGP). Positions 1011-1013 (RGD) match the Cell attachment site motif. Positions 1011–1022 (RGDKGEPGDKGA) are enriched in basic and acidic residues. The segment covering 1095-1107 (AGPPGPPGPPGPP) has biased composition (pro residues). The segment covering 1108–1120 (GVSGGGYDFGFEG) has biased composition (gly residues). Residues 1126–1372 (DQPRSQPSLR…RVEVGPVCFK (247 aa)) constitute a propeptide, C-terminal propeptide. A Fibrillar collagen NC1 domain is found at 1139-1372 (YEVDATLKSL…RVEVGPVCFK (234 aa)). 3 cysteine pairs are disulfide-bonded: cysteine 1169-cysteine 1201, cysteine 1209-cysteine 1370, and cysteine 1278-cysteine 1323. Ca(2+)-binding residues include aspartate 1187, asparagine 1189, glutamine 1190, cysteine 1192, and aspartate 1195. N-linked (GlcNAc...) asparagine glycosylation occurs at asparagine 1273.

The protein belongs to the fibrillar collagen family. Trimers of one alpha 2(I) and two alpha 1(I) chains. Interacts (via C-terminus) with TMEM131 (via PapD-L domain); the interaction is direct and is involved in assembly and TRAPPIII ER-to-Golgi transport complex-dependent secretion of collagen. Proline residues at the third position of the tripeptide repeating unit (G-X-P) are hydroxylated in some or all of the chains. Proline residues at the second position of the tripeptide repeating unit (G-P-X) are hydroxylated in some of the chains. As to expression, forms the fibrils of tendon, ligaments and bones. In bones the fibrils are mineralized with calcium hydroxyapatite. Expressed in flagella of epididymal sperm.

It is found in the secreted. Its subcellular location is the extracellular space. It localises to the extracellular matrix. Its function is as follows. Type I collagen is a member of group I collagen (fibrillar forming collagen). This chain is Collagen alpha-2(I) chain (Col1a2), found in Rattus norvegicus (Rat).